Consider the following 344-residue polypeptide: Holliday junction branch migration complex subunit RuvB (344 aa).

Residues 1-182 are large ATPase domain (RuvB-L); it reads MRIELLNTPP…FGINSRFDYY (182 aa). ATP-binding positions include I21, R22, G63, K66, T67, T68, 129 to 131, R172, Y182, and R219; that span reads EDF. Position 67 (T67) interacts with Mg(2+). A small ATPAse domain (RuvB-S) region spans residues 183–253; it reads APELLEGIIR…IAMKTLDCLE (71 aa). The interval 256–344 is head domain (RuvB-H); that stretch reads EEGLDDMDKK…ISLFDAQPTS (89 aa). DNA is bound by residues R311 and R316.

Belongs to the RuvB family. In terms of assembly, homohexamer. Forms an RuvA(8)-RuvB(12)-Holliday junction (HJ) complex. HJ DNA is sandwiched between 2 RuvA tetramers; dsDNA enters through RuvA and exits via RuvB. An RuvB hexamer assembles on each DNA strand where it exits the tetramer. Each RuvB hexamer is contacted by two RuvA subunits (via domain III) on 2 adjacent RuvB subunits; this complex drives branch migration. In the full resolvosome a probable DNA-RuvA(4)-RuvB(12)-RuvC(2) complex forms which resolves the HJ.

It is found in the cytoplasm. The enzyme catalyses ATP + H2O = ADP + phosphate + H(+). In terms of biological role, the RuvA-RuvB-RuvC complex processes Holliday junction (HJ) DNA during genetic recombination and DNA repair, while the RuvA-RuvB complex plays an important role in the rescue of blocked DNA replication forks via replication fork reversal (RFR). RuvA specifically binds to HJ cruciform DNA, conferring on it an open structure. The RuvB hexamer acts as an ATP-dependent pump, pulling dsDNA into and through the RuvAB complex. RuvB forms 2 homohexamers on either side of HJ DNA bound by 1 or 2 RuvA tetramers; 4 subunits per hexamer contact DNA at a time. Coordinated motions by a converter formed by DNA-disengaged RuvB subunits stimulates ATP hydrolysis and nucleotide exchange. Immobilization of the converter enables RuvB to convert the ATP-contained energy into a lever motion, pulling 2 nucleotides of DNA out of the RuvA tetramer per ATP hydrolyzed, thus driving DNA branch migration. The RuvB motors rotate together with the DNA substrate, which together with the progressing nucleotide cycle form the mechanistic basis for DNA recombination by continuous HJ branch migration. Branch migration allows RuvC to scan DNA until it finds its consensus sequence, where it cleaves and resolves cruciform DNA. In Pelodictyon phaeoclathratiforme (strain DSM 5477 / BU-1), this protein is Holliday junction branch migration complex subunit RuvB.